The following is a 531-amino-acid chain: Peptide chain release factor 3 (531 aa).

The tr-type G domain maps to 13-282; it reads AKRRTFAIIS…TLIKYAPPPK (270 aa). Residues 22-29, 90-94, and 144-147 contribute to the GTP site; these read SHPDAGKT, DTPGH, and NKLD.

The protein belongs to the TRAFAC class translation factor GTPase superfamily. Classic translation factor GTPase family. PrfC subfamily.

It is found in the cytoplasm. Increases the formation of ribosomal termination complexes and stimulates activities of RF-1 and RF-2. It binds guanine nucleotides and has strong preference for UGA stop codons. It may interact directly with the ribosome. The stimulation of RF-1 and RF-2 is significantly reduced by GTP and GDP, but not by GMP. This is Peptide chain release factor 3 from Psychrobacter cryohalolentis (strain ATCC BAA-1226 / DSM 17306 / VKM B-2378 / K5).